A 1668-amino-acid polypeptide reads, in one-letter code: Chitin synthase chs-2 (1668 aa).

Residues 1–19 are compositionally biased toward basic and acidic residues; sequence MMNTLDHRPLGRMETMEGK. The interval 1–51 is disordered; it reads MMNTLDHRPLGRMETMEGKPDEDEVPTSSNSDAKGKGYYYSSGTVPTDDST. Topologically, residues 1 to 116 are cytoplasmic; the sequence is MMNTLDHRPL…HGFWHDASLQ (116 aa). A helical membrane pass occupies residues 117–137; it reads VLKLATFLVLFLLTLGSAVVA. The Extracellular segment spans residues 138 to 176; it reads KSTFILMTSAIGWGGQTITICNQVISEATQNTVKLKNAH. The helical transmembrane segment at 177–197 threads the bilayer; the sequence is VVKWVWATLLALSAPEALCFV. Topologically, residues 198 to 212 are cytoplasmic; it reads RSMHRTMFRNVKRPT. A helical membrane pass occupies residues 213 to 233; sequence FIQFVFVLIIETFHSIGVGIL. At 234–242 the chain is on the extracellular side; that stretch reads VFRIFPDLD. The chain crosses the membrane as a helical span at residues 243–263; sequence AVTAAQLTNAMCFVPAILSVI. Residues 264–271 lie on the Cytoplasmic side of the membrane; that stretch reads SRKPNKSA. Residues 272–292 traverse the membrane as a helical segment; that stretch reads LLLVIIDFAAIAAQSSGFWAL. Residues 293–301 are Extracellular-facing; the sequence is PMFLPNLQK. Residues 302 to 322 form a helical membrane-spanning segment; it reads HLVAIPVSLTLISLAWWQNFV. Residues 323 to 347 lie on the Cytoplasmic side of the membrane; it reads HRDSVFPPVRTLAKFAQRLSERRSK. A helical membrane pass occupies residues 348-368; it reads TYAFVSLWKICIYVVCCFLFI. The Extracellular segment spans residues 369 to 487; the sequence is SSRMKIEDML…IYSNYVERNQ (119 aa). Asparagine 396 carries an N-linked (GlcNAc...) asparagine glycan. A helical transmembrane segment spans residues 488-508; it reads LTMAYDALWLVIFQFGAVFVC. Topologically, residues 509 to 522 are cytoplasmic; it reads YHSSKFACKVMMQR. A helical transmembrane segment spans residues 523-543; it reads MGFALPMALSVPVTVLLLSTN. Over 544 to 576 the chain is Extracellular; sequence CRMRQKDSCYGTNVLTVELFWQCNGASMSLADF. The chain crosses the membrane as a helical span at residues 577–597; that stretch reads ILTPQTWIWLCWLASQFWITI. The Cytoplasmic segment spans residues 598 to 1045; it reads HLWNPKHERL…ISIWYIIYQL (448 aa). A helical membrane pass occupies residues 1046-1066; that stretch reads VMLISSILGPGTIFVMIIGAI. The Extracellular segment spans residues 1067–1074; it reads SISFSIDT. A helical membrane pass occupies residues 1075–1095; that stretch reads LISLVIVSIPVVVFIVVCLTA. Residues 1096-1100 lie on the Cytoplasmic side of the membrane; sequence KPEHQ. A helical transmembrane segment spans residues 1101-1121; the sequence is LICAQTIGAIFAMLMTAVVVG. The Extracellular segment spans residues 1122–1136; sequence TSLQLQKDGLLSPHS. The helical transmembrane segment at 1137 to 1157 threads the bilayer; the sequence is MFTVAVATSFLTAAILHPLEF. Residue threonine 1158 is a topological domain, cytoplasmic. A helical transmembrane segment spans residues 1159 to 1179; the sequence is CIIPGTIYFLAIPCMYMLLPI. At 1180–1375 the chain is on the extracellular side; the sequence is YSVCNMHTVS…RAGLIAIRNS (196 aa). The tract at residues 1192–1216 is disordered; it reads TREDPRPTEKNTLAKKTPGNLESGD. Positions 1280–1335 form a coiled coil; that stretch reads QIDKCSEADEDEQAEIEDALEMSNQSHAAKKNQKWKQAQSEAWLADKALKRAEREY. A glycan (N-linked (GlcNAc...) asparagine) is linked at asparagine 1303. The helical transmembrane segment at 1376-1396 threads the bilayer; that stretch reads HTVYFLMINIVFIISVLVLQI. The Cytoplasmic portion of the chain corresponds to 1397–1440; it reads HKDCLNIEWPLGPKFNHTVRPCYANHDDNQKEEVWVMTRLQLEP. A helical membrane pass occupies residues 1441–1461; the sequence is IGLVFLIFFVSILVIQFLAML. Residues 1462 to 1668 are Extracellular-facing; that stretch reads CHRFGTLAHI…SSGDVELRRF (207 aa). The tract at residues 1625–1668 is disordered; that stretch reads RLFTAQQDQNSPTSDGNRRKSNSRPWDQPTSSATSSGDVELRRF. Polar residues-rich tracts occupy residues 1628-1639 and 1647-1661; these read TAQQDQNSPTSD and SRPW…TSSG.

The protein belongs to the chitin synthase family. Class IV subfamily.

The protein resides in the cell membrane. The catalysed reaction is [(1-&gt;4)-N-acetyl-beta-D-glucosaminyl](n) + UDP-N-acetyl-alpha-D-glucosamine = [(1-&gt;4)-N-acetyl-beta-D-glucosaminyl](n+1) + UDP + H(+). In terms of biological role, may be involved in chitin synthesis in the pharynx during larval development. This chain is Chitin synthase chs-2, found in Caenorhabditis elegans.